Consider the following 66-residue polypeptide: Large ribosomal subunit protein bL35 (66 aa).

This sequence belongs to the bacterial ribosomal protein bL35 family.

The protein is Large ribosomal subunit protein bL35 of Brucella melitensis biotype 1 (strain ATCC 23456 / CCUG 17765 / NCTC 10094 / 16M).